A 240-amino-acid polypeptide reads, in one-letter code: UDP-2,3-diacylglucosamine hydrolase (240 aa).

Mn(2+) contacts are provided by D9, H11, D43, N81, and H116. 81 to 82 (NR) is a binding site for substrate. Residues D124, S162, K166, K169, and H197 each contribute to the substrate site. 2 residues coordinate Mn(2+): H197 and H199.

This sequence belongs to the LpxH family. Mn(2+) serves as cofactor.

Its subcellular location is the cell inner membrane. The catalysed reaction is UDP-2-N,3-O-bis[(3R)-3-hydroxytetradecanoyl]-alpha-D-glucosamine + H2O = 2-N,3-O-bis[(3R)-3-hydroxytetradecanoyl]-alpha-D-glucosaminyl 1-phosphate + UMP + 2 H(+). It functions in the pathway glycolipid biosynthesis; lipid IV(A) biosynthesis; lipid IV(A) from (3R)-3-hydroxytetradecanoyl-[acyl-carrier-protein] and UDP-N-acetyl-alpha-D-glucosamine: step 4/6. Its function is as follows. Hydrolyzes the pyrophosphate bond of UDP-2,3-diacylglucosamine to yield 2,3-diacylglucosamine 1-phosphate (lipid X) and UMP by catalyzing the attack of water at the alpha-P atom. Involved in the biosynthesis of lipid A, a phosphorylated glycolipid that anchors the lipopolysaccharide to the outer membrane of the cell. The protein is UDP-2,3-diacylglucosamine hydrolase of Neisseria gonorrhoeae (strain ATCC 700825 / FA 1090).